We begin with the raw amino-acid sequence, 292 residues long: Shikimate dehydrogenase (NADP(+)) (292 aa).

Shikimate-binding positions include 22–24 (SLS) and serine 69. Residue lysine 73 is the Proton acceptor of the active site. Shikimate is bound by residues asparagine 94 and aspartate 111. Residues 135-139 (GVGGA) and isoleucine 236 contribute to the NADP(+) site. Position 238 (tyrosine 238) interacts with shikimate. Glycine 260 contacts NADP(+).

It belongs to the shikimate dehydrogenase family. In terms of assembly, homodimer.

It catalyses the reaction shikimate + NADP(+) = 3-dehydroshikimate + NADPH + H(+). The protein operates within metabolic intermediate biosynthesis; chorismate biosynthesis; chorismate from D-erythrose 4-phosphate and phosphoenolpyruvate: step 4/7. In terms of biological role, involved in the biosynthesis of the chorismate, which leads to the biosynthesis of aromatic amino acids. Catalyzes the reversible NADPH linked reduction of 3-dehydroshikimate (DHSA) to yield shikimate (SA). This chain is Shikimate dehydrogenase (NADP(+)), found in Streptococcus pyogenes serotype M28 (strain MGAS6180).